A 368-amino-acid polypeptide reads, in one-letter code: Peptide chain release factor 2 (368 aa).

N5-methylglutamine is present on Gln250.

The protein belongs to the prokaryotic/mitochondrial release factor family. Post-translationally, methylated by PrmC. Methylation increases the termination efficiency of RF2.

The protein localises to the cytoplasm. Peptide chain release factor 2 directs the termination of translation in response to the peptide chain termination codons UGA and UAA. The protein is Peptide chain release factor 2 of Chlamydia abortus (strain DSM 27085 / S26/3) (Chlamydophila abortus).